The sequence spans 254 residues: Putative epimerase LsrE (254 aa).

Residues 14–34 traverse the membrane as a helical segment; it reads VALLASYPLSVGILAGQWIAL. A divalent metal cation is bound by residues histidine 50, aspartate 52, and histidine 81. The Proton acceptor role is filled by aspartate 52. Substrate is bound by residues histidine 81, 166–169, 199–201, and 221–222; these read GYGS, DGS, and GS. Aspartate 199 lines the a divalent metal cation pocket. The active-site Proton donor is aspartate 199.

This sequence belongs to the ribulose-phosphate 3-epimerase family. The cofactor is a divalent metal cation.

The protein resides in the cell membrane. The sequence is that of Putative epimerase LsrE (lsrE) from Salmonella typhi.